The chain runs to 434 residues: Putative D-alanyl-D-alanine carboxypeptidase (434 aa).

A helical; Signal-anchor membrane pass occupies residues 7-25; it reads YLSLLAVSCSVSAAKYPVL.

Belongs to the peptidase S12 family. YfeW subfamily.

The protein resides in the cell inner membrane. The catalysed reaction is Preferential cleavage: (Ac)2-L-Lys-D-Ala-|-D-Ala. Also transpeptidation of peptidyl-alanyl moieties that are N-acyl substituents of D-alanine.. The polypeptide is Putative D-alanyl-D-alanine carboxypeptidase (Escherichia coli O157:H7).